A 117-amino-acid polypeptide reads, in one-letter code: Protein Wnt-6 (117 aa).

A lipid anchor (O-palmitoleoyl serine; by PORCN) is attached at Ser-1. Cys-83 and Cys-98 form a disulfide bridge. Asn-84 carries an N-linked (GlcNAc...) asparagine glycan.

This sequence belongs to the Wnt family. Palmitoleoylation is required for efficient binding to frizzled receptors. Depalmitoleoylation leads to Wnt signaling pathway inhibition.

The protein localises to the secreted. It localises to the extracellular space. It is found in the extracellular matrix. Ligand for members of the frizzled family of seven transmembrane receptors. Probable developmental protein. May be a signaling molecule which affects the development of discrete regions of tissues. Is likely to signal over only few cell diameters. The protein is Protein Wnt-6 (WNT-6) of Plethodon jordani (Red-cheeked salamander).